Here is a 564-residue protein sequence, read N- to C-terminus: Bicarbonate transporter BicA (564 aa).

Topologically, residues 1–11 (MQITNKIHFRN) are cytoplasmic. The helical transmembrane segment at 12-37 (LQGDLFGGVTAAVIALPMALAFGIAS) threads the bilayer. The Periplasmic segment spans residues 38-40 (GAG). Residues 41–58 (ATAGLWGAVIVGFFAALF) form a helical membrane-spanning segment. Residues 59–70 (GGTPTLISEPTG) lie on the Cytoplasmic side of the membrane. Thr-69 contributes to the hydrogencarbonate binding site. Residues 71-86 (PMTVVQTAVIASLVAA) traverse the membrane as a helical segment. Residues 87–90 (DPDN) lie on the Periplasmic side of the membrane. A helical transmembrane segment spans residues 91–112 (GLAMAFTVVMMAGLFQIAFGLL). Over 113-122 (KLGKYVTMMP) the chain is Cytoplasmic. Residues 123–145 (YTVISGFMSGIGIILVILQLAPF) form a helical membrane-spanning segment. Over 146-170 (LGQASPKGGVIGTLQALPNLVSNVR) the chain is Periplasmic. Residues 171–185 (PVETLLALMTVGIIW) traverse the membrane as a helical segment. Topologically, residues 186 to 196 (FMPSRWKKFAP) are cytoplasmic. A helical membrane pass occupies residues 197–211 (PQLVALVLGTIISIT). The Periplasmic portion of the chain corresponds to 212–240 (LFGDLDIRRIGEIQAGLPALQLPVFQADQ). The helical transmembrane segment at 241–269 (LQRMLIDAAVLGMLGCIDALLTSVVADSL) threads the bilayer. 2 residues coordinate Na(+): Asp-258 and Thr-262. Over 270 to 275 (TRTEHN) the chain is Cytoplasmic. Residues 276–292 (SNKELVGQGIGNVMSGL) form a helical membrane-spanning segment. The Periplasmic segment spans residues 293–302 (FGGLGGAGAT). Residue Gly-300 participates in Na(+) binding. Ala-301 is a hydrogencarbonate binding site. Residue Thr-302 participates in Na(+) binding. The helical transmembrane segment at 303–312 (MGTVVNIQSG) threads the bilayer. At 313-315 (GRT) the chain is on the cytoplasmic side. A helical membrane pass occupies residues 316 to 338 (ALSGLIRAMVLLVVILGAAKLAA). The Periplasmic segment spans residues 339 to 341 (TIP). A helical transmembrane segment spans residues 342 to 357 (LAVLAGIAFKVGVDII). The Cytoplasmic portion of the chain corresponds to 358–369 (DWGFLKRAHHVS). A helical membrane pass occupies residues 370 to 390 (IKGALIMYAVIVLTVLVDLIA). Topologically, residues 391–392 (AV) are periplasmic. The chain crosses the membrane as a helical span at residues 393-405 (GIGVFIANILTID). At 406–564 (RMSALQSKAV…PSSSSVQTTY (159 aa)) the chain is on the cytoplasmic side. In terms of domain architecture, STAS spans 432–542 (KRWLDEGNGR…DDRSEALKDA (111 aa)).

Belongs to the SLC26A/SulP transporter (TC 2.A.53) family. Forms homodimers through the STAS cytoplasmic domain.

The protein localises to the cell inner membrane. Functionally, low affinity, high-flux Na(+)-dependent bicarbonate transporter. Involved in carbone dioxide-concentrating mechanisms (CCMs) that accumulate CO(2) and improve photosynthetic carbon fixation. This chain is Bicarbonate transporter BicA, found in Synechocystis sp. (strain ATCC 27184 / PCC 6803 / Kazusa).